Reading from the N-terminus, the 203-residue chain is SOSS complex subunit B1 (203 aa).

A DNA-binding region (OB) is located at residues 22-92; it reads IVLETGRVTK…TLYTGRGGDL (71 aa). The tract at residues 111 to 203 is disordered; it reads PNPEYIAQQS…GKEPRRTGKR (93 aa). The span at 117–128 shows a compositional bias: polar residues; that stretch reads AQQSQNKQAQAE. The segment covering 129-140 has biased composition (low complexity); that stretch reads SGTGTNSHNSSS. The span at 149-182 shows a compositional bias: polar residues; the sequence is ENGNGSNSSGPPTHQSTAPTHSTSGRITRSQPNH.

It belongs to the SOSS-B family. SOSS-B1 subfamily. As to quaternary structure, component of the SOSS complex, composed of soss-b (soss-b1/nabp2 or soss-b2/nabp1), soss-a/ints3 and soss-c/inip. SOSS complexes containing soss-b1/nabp2 are more abundant than complexes containing soss-b2/nabp1.

The protein resides in the nucleus. In terms of biological role, component of the SOSS complex, a multiprotein complex that functions downstream of the MRN complex to promote DNA repair and G2/M checkpoint. In the SOSS complex, acts as a sensor of single-stranded DNA that binds to single-stranded DNA. The SOSS complex associates with DNA lesions and influences diverse endpoints in the cellular DNA damage response including cell-cycle checkpoint activation, recombinational repair and maintenance of genomic stability. Required for efficient homologous recombination-dependent repair of double-strand breaks (DSBs). The polypeptide is SOSS complex subunit B1 (nabp2) (Xenopus tropicalis (Western clawed frog)).